A 74-amino-acid polypeptide reads, in one-letter code: uncharacterized protein (74 aa).

Residues Ile-52–Leu-72 form a helical membrane-spanning segment.

The protein localises to the membrane. This is an uncharacterized protein from Methanocaldococcus jannaschii (strain ATCC 43067 / DSM 2661 / JAL-1 / JCM 10045 / NBRC 100440) (Methanococcus jannaschii).